Consider the following 344-residue polypeptide: N-acetyl-gamma-glutamyl-phosphate reductase (344 aa).

Cysteine 150 is an active-site residue.

This sequence belongs to the NAGSA dehydrogenase family. Type 1 subfamily.

The protein resides in the cytoplasm. The catalysed reaction is N-acetyl-L-glutamate 5-semialdehyde + phosphate + NADP(+) = N-acetyl-L-glutamyl 5-phosphate + NADPH + H(+). Its pathway is amino-acid biosynthesis; L-arginine biosynthesis; N(2)-acetyl-L-ornithine from L-glutamate: step 3/4. In terms of biological role, catalyzes the NADPH-dependent reduction of N-acetyl-5-glutamyl phosphate to yield N-acetyl-L-glutamate 5-semialdehyde. The sequence is that of N-acetyl-gamma-glutamyl-phosphate reductase from Pseudomonas putida (strain W619).